We begin with the raw amino-acid sequence, 219 residues long: Ribonuclease HII (219 aa).

The RNase H type-2 domain occupies 22–219 (GLVAGVDEVG…LLAMRMEAVV (198 aa)). Residues Asp28, Glu29, and Asp125 each coordinate a divalent metal cation.

This sequence belongs to the RNase HII family. Mn(2+) serves as cofactor. The cofactor is Mg(2+).

It is found in the cytoplasm. The enzyme catalyses Endonucleolytic cleavage to 5'-phosphomonoester.. In terms of biological role, endonuclease that specifically degrades the RNA of RNA-DNA hybrids. The protein is Ribonuclease HII of Granulibacter bethesdensis (strain ATCC BAA-1260 / CGDNIH1).